Reading from the N-terminus, the 375-residue chain is tRNA(Met) cytidine acetate ligase (375 aa).

ATP is bound by residues 7-20 (VVEYNPFHNGHRYH), G101, N151, and R176.

The protein belongs to the TmcAL family.

The protein resides in the cytoplasm. The catalysed reaction is cytidine(34) in elongator tRNA(Met) + acetate + ATP = N(4)-acetylcytidine(34) in elongator tRNA(Met) + AMP + diphosphate. Catalyzes the formation of N(4)-acetylcytidine (ac(4)C) at the wobble position of elongator tRNA(Met), using acetate and ATP as substrates. First activates an acetate ion to form acetyladenylate (Ac-AMP) and then transfers the acetyl group to tRNA to form ac(4)C34. This Limosilactobacillus fermentum (strain NBRC 3956 / LMG 18251) (Lactobacillus fermentum) protein is tRNA(Met) cytidine acetate ligase.